We begin with the raw amino-acid sequence, 636 residues long: 1-deoxy-D-xylulose-5-phosphate synthase (636 aa).

Thiamine diphosphate-binding positions include His-73 and 114–116; that span reads SHA. Asp-146 lines the Mg(2+) pocket. Residues 147–148, Asn-176, Tyr-287, and Glu-368 contribute to the thiamine diphosphate site; that span reads GA. Residue Asn-176 coordinates Mg(2+).

The protein belongs to the transketolase family. DXPS subfamily. Homodimer. Requires Mg(2+) as cofactor. Thiamine diphosphate serves as cofactor.

It catalyses the reaction D-glyceraldehyde 3-phosphate + pyruvate + H(+) = 1-deoxy-D-xylulose 5-phosphate + CO2. It functions in the pathway metabolic intermediate biosynthesis; 1-deoxy-D-xylulose 5-phosphate biosynthesis; 1-deoxy-D-xylulose 5-phosphate from D-glyceraldehyde 3-phosphate and pyruvate: step 1/1. Its function is as follows. Catalyzes the acyloin condensation reaction between C atoms 2 and 3 of pyruvate and glyceraldehyde 3-phosphate to yield 1-deoxy-D-xylulose-5-phosphate (DXP). The chain is 1-deoxy-D-xylulose-5-phosphate synthase from Corynebacterium glutamicum (strain ATCC 13032 / DSM 20300 / JCM 1318 / BCRC 11384 / CCUG 27702 / LMG 3730 / NBRC 12168 / NCIMB 10025 / NRRL B-2784 / 534).